The sequence spans 110 residues: Defensin-like protein 296 (110 aa).

A signal peptide spans 1-28; the sequence is MASKITIFFVLALVVVCTMMVCIPTATA. Disulfide bonds link C34–C52, C40–C57, C45–C59, C81–C102, C87–C107, and C95–C109.

This sequence belongs to the DEFL family.

The protein localises to the secreted. In Arabidopsis thaliana (Mouse-ear cress), this protein is Defensin-like protein 296.